Reading from the N-terminus, the 208-residue chain is UPF0316 protein SERP1448 (208 aa).

3 helical membrane-spanning segments follow: residues 8 to 28, 40 to 60, and 66 to 86; these read PWLM…FLTM, VAAV…GLVM, and IQNI…GMKI.

The protein belongs to the UPF0316 family.

It is found in the cell membrane. The chain is UPF0316 protein SERP1448 from Staphylococcus epidermidis (strain ATCC 35984 / DSM 28319 / BCRC 17069 / CCUG 31568 / BM 3577 / RP62A).